The sequence spans 249 residues: Ribonuclease 3 (249 aa).

The 123-residue stretch at 29–151 folds into the RNase III domain; the sequence is SSDIEVIKKN…LIGALYECLR (123 aa). Glu65 is a Mg(2+) binding site. The active site involves Asp69. Mg(2+) is bound by residues Glu137 and Glu140. Residue Glu140 is part of the active site. The region spanning 179–249 is the DRBM domain; it reads NEKSALQEWS…AKEALKKLTN (71 aa). Residues 227–249 form a disordered region; that stretch reads GWGSSRKKAQKEAAKEALKKLTN. Over residues 236-249 the composition is skewed to basic and acidic residues; it reads QKEAAKEALKKLTN.

It belongs to the ribonuclease III family. Homodimer. Mg(2+) is required as a cofactor.

It is found in the cytoplasm. The enzyme catalyses Endonucleolytic cleavage to 5'-phosphomonoester.. Its function is as follows. Digests double-stranded RNA. Involved in the processing of primary rRNA transcript to yield the immediate precursors to the large and small rRNAs (23S and 16S). Processes some mRNAs, and tRNAs when they are encoded in the rRNA operon. Processes pre-crRNA and tracrRNA of type II CRISPR loci if present in the organism. The polypeptide is Ribonuclease 3 (Prochlorococcus marinus (strain SARG / CCMP1375 / SS120)).